The sequence spans 351 residues: Methylthioribose-1-phosphate isomerase (351 aa).

Residues 51 to 53 (RGA), R94, and Q199 each bind substrate. D240 functions as the Proton donor in the catalytic mechanism. 250 to 251 (NK) contributes to the substrate binding site.

Belongs to the EIF-2B alpha/beta/delta subunits family. MtnA subfamily. As to quaternary structure, homodimer.

It catalyses the reaction 5-(methylsulfanyl)-alpha-D-ribose 1-phosphate = 5-(methylsulfanyl)-D-ribulose 1-phosphate. It functions in the pathway amino-acid biosynthesis; L-methionine biosynthesis via salvage pathway; L-methionine from S-methyl-5-thio-alpha-D-ribose 1-phosphate: step 1/6. Functionally, catalyzes the interconversion of methylthioribose-1-phosphate (MTR-1-P) into methylthioribulose-1-phosphate (MTRu-1-P). The polypeptide is Methylthioribose-1-phosphate isomerase (Bacillus cereus (strain ZK / E33L)).